The chain runs to 642 residues: Threonine--tRNA ligase (642 aa).

The 61-residue stretch at 1 to 61 (MPVITITNGL…MQDSKLDIIT (61 aa)) folds into the TGS domain. Residues 243-534 (DHRKIGQQLD…LIEEYAGFFP (292 aa)) are catalytic. Positions 334, 385, and 511 each coordinate Zn(2+).

This sequence belongs to the class-II aminoacyl-tRNA synthetase family. Homodimer. The cofactor is Zn(2+).

It localises to the cytoplasm. The catalysed reaction is tRNA(Thr) + L-threonine + ATP = L-threonyl-tRNA(Thr) + AMP + diphosphate + H(+). Catalyzes the attachment of threonine to tRNA(Thr) in a two-step reaction: L-threonine is first activated by ATP to form Thr-AMP and then transferred to the acceptor end of tRNA(Thr). Also edits incorrectly charged L-seryl-tRNA(Thr). The chain is Threonine--tRNA ligase from Baumannia cicadellinicola subsp. Homalodisca coagulata.